Consider the following 426-residue polypeptide: Histidine--tRNA ligase (426 aa).

Belongs to the class-II aminoacyl-tRNA synthetase family. Homodimer.

The protein localises to the cytoplasm. The enzyme catalyses tRNA(His) + L-histidine + ATP = L-histidyl-tRNA(His) + AMP + diphosphate + H(+). The sequence is that of Histidine--tRNA ligase from Geobacillus kaustophilus (strain HTA426).